Reading from the N-terminus, the 227-residue chain is Large ribosomal subunit protein uL3 (227 aa).

Glutamine 151 carries the post-translational modification N5-methylglutamine.

It belongs to the universal ribosomal protein uL3 family. In terms of assembly, part of the 50S ribosomal subunit. Forms a cluster with proteins L14 and L19. Post-translationally, methylated by PrmB.

Its function is as follows. One of the primary rRNA binding proteins, it binds directly near the 3'-end of the 23S rRNA, where it nucleates assembly of the 50S subunit. In Gluconobacter oxydans (strain 621H) (Gluconobacter suboxydans), this protein is Large ribosomal subunit protein uL3.